The following is a 743-amino-acid chain: UV-stimulated scaffold protein A (743 aa).

The segment at 2 to 145 (DQKLSELVEV…HFLKQNKKID (144 aa)) is VHS-like. The stretch at 147-199 (QDVRSRTQAERKREEEKQRRLENIYKEKVKKATAEMEDMLEEIQSSLTEMENC) forms a coiled coil. Residues 221 to 310 (SDMRTKPTSQ…DDSDGDYEGS (90 aa)) form a disordered region. Low complexity predominate over residues 226–252 (KPTSQSPSHSKSTSQSSAYSKSTSQVS). A compositionally biased stretch (basic and acidic residues) spans 283-300 (SLGEGAKESDKSARKSDT). Residues 380 to 411 (ESLKCAIDVKKEIEAALKKYKEMNIDCHTKER) are a coiled coil. Disordered stretches follow at residues 413 to 482 (VMTA…NDEL) and 500 to 525 (KALP…DLSQ). Residues 417–428 (SDDDDDDDEFEE) show a composition bias toward acidic residues. Basic and acidic residues-rich tracts occupy residues 429–447 (VPEK…REEY) and 510–522 (GEPK…RETD). A Glycyl lysine isopeptide (Lys-Gly) (interchain with G-Cter in ubiquitin) cross-link involves residue lysine 432. The UVSSA-type zinc-finger motif lies at 591 to 618 (KHKCLAPMPNGSLCERQDRYKCPFHGKI). Zn(2+)-binding residues include cysteine 594, cysteine 604, cysteine 612, and histidine 615.

It belongs to the UVSSA family. Monoubiquitinated at Lys-432 in response to transcription stress; this promotes efficient transfer of TFIIH to stalled RNA polymerase II.

It localises to the chromosome. Factor involved in transcription-coupled nucleotide excision repair (TC-NER), a mechanism that rapidly removes RNA polymerase II-blocking lesions from the transcribed strand of active genes. Acts as a key adapter that promotes recruitment of factors involved in TC-NER. Facilitates the ubiquitination of the elongating form of RNA polymerase II (RNA pol IIo) at DNA damage sites, thereby promoting RNA pol IIo backtracking and access by the TC-NER machinery to lesion sites. Also promotes stabilization of ERCC6/CSB by recruiting deubiquitinating enzyme USP7 to TC-NER complexes, preventing UV-induced degradation of ERCC6 by the proteasome. Mediates the recruitment of the TFIIH complex and other factors that are required for nucleotide excision repair to RNA polymerase II. Also required to inactivate stalled RNA polymerase II by blocking the access of TCEA1/TFIIS, thereby preventing reactivation of RNA polymerase II. This Xenopus tropicalis (Western clawed frog) protein is UV-stimulated scaffold protein A (uvssa).